The chain runs to 171 residues: MNPTSADFVIPPALETAKPFGETEMYRILCDMEKIVPTKHNLNRVKNMSPFWKGDERSYNWFLDFVKSEWGEWIERYARGSHSLSPVTRKNGSPFQMVQAELWSLIHKPTWISSGFISPTCAVCMTNPVWVDFVWSCKHISTCIKCLKMLSRGSNGFKCPICRCQQRVRNY.

The segment at 121–163 (CAVCMTNPVWVDFVWSCKHISTCIKCLKMLSRGSNGFKCPICR) adopts an RING-type zinc-finger fold.

Belongs to the IIV-6 157L family.

The sequence is that of Putative RING finger protein 027R from Aedes vexans (Inland floodwater mosquito).